The chain runs to 334 residues: Cysteine and histidine-rich domain-containing protein 1 (334 aa).

Residues Cys-5, Cys-10, Cys-24, His-27, Cys-42, Cys-43, Cys-59, His-64, Cys-156, Cys-161, Cys-175, His-178, Cys-193, Cys-194, Cys-210, and His-215 each contribute to the Zn(2+) site. 2 consecutive CHORD domains span residues 5-64 (CYNR…KGQH) and 156-215 (CKNG…KGTH). In terms of domain architecture, CS spans 226–315 (VVPCRHDWHQ…AEFMTWARLE (90 aa)).

Its function is as follows. Regulates centrosome duplication. This Xenopus laevis (African clawed frog) protein is Cysteine and histidine-rich domain-containing protein 1 (chordc1).